The following is a 65-amino-acid chain: uncharacterized protein (65 aa).

Residues 1–22 (MEKETPQQETKQSTNKESGFFD) form a disordered region. A compositionally biased stretch (polar residues) spans 7–17 (QQETKQSTNKE). The stretch at 22–65 (DEIIKRTNQLLEKEKELHEKYNKEITSQQDQIDQLKKKINQLKY) forms a coiled coil.

This is an uncharacterized protein from Dictyostelium discoideum (Social amoeba).